The primary structure comprises 400 residues: Enoyl-[acyl-carrier-protein] reductase [NADH] 1 (400 aa).

Residues 48-53, 74-75, 111-112, and 139-140 contribute to the NAD(+) site; these read GSSSGY, FE, DA, and LA. Tyr225 provides a ligand contact to substrate. Tyr235 acts as the Proton donor in catalysis. NAD(+)-binding positions include Lys244 and 273–275; that span reads VVT.

It belongs to the TER reductase family. In terms of assembly, monomer.

It catalyses the reaction a 2,3-saturated acyl-[ACP] + NAD(+) = a (2E)-enoyl-[ACP] + NADH + H(+). The protein operates within lipid metabolism; fatty acid biosynthesis. Involved in the final reduction of the elongation cycle of fatty acid synthesis (FAS II). Catalyzes the reduction of a carbon-carbon double bond in an enoyl moiety that is covalently linked to an acyl carrier protein (ACP). This chain is Enoyl-[acyl-carrier-protein] reductase [NADH] 1, found in Photobacterium profundum (strain SS9).